Reading from the N-terminus, the 119-residue chain is Protein SPIRAL1 (119 aa).

A compositionally biased stretch (gly residues) spans 1 to 11 (MGRGNSCGGGQ). Disordered stretches follow at residues 1 to 47 (MGRG…PPVT) and 85 to 105 (EGQN…HAAP). The segment covering 24-34 (APKPVPAPRPA) has biased composition (pro residues).

Belongs to the SPIRAL1 family. Ubiquitinated. Upon salt-stress induction, it is subject to proteasome-dependent degradation. In terms of tissue distribution, ubiquitous. High expression was associated with tissues undergoing rapid cell expansion, including the root elongation zone, hypocotyls of dark grown-seedlings, and cotyledons of light-grown seedlings.

It is found in the cytoplasm. It localises to the cytoskeleton. The protein localises to the phragmoplast. The protein resides in the spindle. Required for directional control of cell elongation. Stabilizes growing ends of cortical microtubules and influences their dynamic properties. Acts redundantly with SP1Ls in maintaining the cortical microtubules organization essential for anisotropic cell growth. Plays a key role in salt stress-induced microtubules disassembly. The protein is Protein SPIRAL1 (SPR1) of Arabidopsis thaliana (Mouse-ear cress).